Reading from the N-terminus, the 470-residue chain is MAQMTSGLYPMFGFFICLLFLPASWEAGANTFQELQKTGEPSIFDHLLPLTPGLTRRALSDHKNSGQHPPDLPKSTATQKPKRQCNTVRLVKPVHKPIDDAKAADYGNTTVGHEPFPASEKNLSSQGKHPMARNERSADDHGSTNSEKRSDGGHSTSAPMRKISCKPVTRTSGTPVSSTETSTKLRTTSQKPETSSHDSDLIRKSTSLPVKSTEVSRTSYRTPRSLGAERHTIPFTSDKSIQLTIEHTKEATRSQSTPTKYERETRSASERISRAHVPPVENHTPSAGETTTQVSAKSTKHTEEATTSTTEKATKAPERPTVNLNTTGLVKAMENTSTAPSPHLHKTETAHQGITGSLTSRMDLRPITSEAHHLQQNTHSLPGGLHSVQEREGSNSFPAWAIVVVILMAVIILLIFLGLIFLVSCASRARHQLTQNSEDAEPEDKGGRNSYPVYLMEQQNLNLNQISSPP.

Positions 1–29 (MAQMTSGLYPMFGFFICLLFLPASWEAGA) are cleaved as a signal peptide. Over 30–401 (NTFQELQKTG…EGSNSFPAWA (372 aa)) the chain is Extracellular. Disordered stretches follow at residues 57-234 (RALS…HTIP) and 248-318 (TKEA…KAPE). Positions 75–87 (STATQKPKRQCNT) are enriched in polar residues. Residue N122 is glycosylated (N-linked (GlcNAc...) asparagine). Basic and acidic residues predominate over residues 132 to 152 (ARNERSADDHGSTNSEKRSDG). Residues 169–193 (TRTSGTPVSSTETSTKLRTTSQKPE) show a composition bias toward polar residues. Basic and acidic residues predominate over residues 194-203 (TSSHDSDLIR). Positions 204 to 222 (KSTSLPVKSTEVSRTSYRT) are enriched in polar residues. The span at 260–273 (KYERETRSASERIS) shows a compositional bias: basic and acidic residues. The span at 283–295 (HTPSAGETTTQVS) shows a compositional bias: polar residues. N-linked (GlcNAc...) asparagine glycosylation is present at N325. Residues 402-422 (IVVVILMAVIILLIFLGLIFL) form a helical membrane-spanning segment. Residues 423 to 470 (VSCASRARHQLTQNSEDAEPEDKGGRNSYPVYLMEQQNLNLNQISSPP) lie on the Cytoplasmic side of the membrane.

The protein resides in the cell membrane. The protein localises to the cytoplasm. In terms of biological role, may modulate NF-kappaB signaling and play a role in cell growth. This chain is Mucin-like protein 3, found in Rattus norvegicus (Rat).